A 352-amino-acid polypeptide reads, in one-letter code: Adenosine deaminase (352 aa).

Ala2 is modified (N-acetylalanine). 2 residues coordinate Zn(2+): His15 and His17. His17 and Asp19 together coordinate substrate. Position 54 is an N6-acetyllysine (Lys54). Gly184 is a binding site for substrate. Residue His214 coordinates Zn(2+). Residue Glu217 is the Proton donor of the active site. Lys232 is modified (N6-acetyllysine). Zn(2+) is bound at residue Asp295. Asp296 provides a ligand contact to substrate.

This sequence belongs to the metallo-dependent hydrolases superfamily. Adenosine and AMP deaminases family. Interacts with DPP4 (via extracellular domain). Interacts with PLG (via Kringle 4 domain); the interaction stimulates PLG activation when in complex with DPP4. Requires Zn(2+) as cofactor. Detected in brain neurons in the median emninence (at protein level). Expressed in secondary deciduum (at protein level). Found in all tissues, occurs in large amounts in T-lymphocytes and, at the time of weaning, in gastrointestinal tissues.

It is found in the cell membrane. The protein resides in the cell junction. It localises to the cytoplasmic vesicle lumen. Its subcellular location is the cytoplasm. The protein localises to the lysosome. It carries out the reaction adenosine + H2O + H(+) = inosine + NH4(+). It catalyses the reaction 2'-deoxyadenosine + H2O + H(+) = 2'-deoxyinosine + NH4(+). The catalysed reaction is cordycepin + H2O + H(+) = 3'-deoxyinosine + NH4(+). Its function is as follows. Catalyzes the hydrolytic deamination of adenosine and 2-deoxyadenosine. Plays an important role in purine metabolism and in adenosine homeostasis. Modulates signaling by extracellular adenosine, and so contributes indirectly to cellular signaling events. Acts as a positive regulator of T-cell coactivation, by binding DPP4. Its interaction with DPP4 regulates lymphocyte-epithelial cell adhesion. Enhances dendritic cell immunogenicity by affecting dendritic cell costimulatory molecule expression and cytokines and chemokines secretion. Enhances CD4+ T-cell differentiation and proliferation. Acts as a positive modulator of adenosine receptors ADORA1 and ADORA2A, by enhancing their ligand affinity via conformational change. Stimulates plasminogen activation. Plays a role in male fertility. Plays a protective role in early postimplantation embryonic development. Also responsible for the deamination of cordycepin (3'-deoxyadenosine), a fungal natural product that shows antitumor, antibacterial, antifungal, antivirus, and immune regulation properties. The polypeptide is Adenosine deaminase (Ada) (Mus musculus (Mouse)).